Here is a 52-residue protein sequence, read N- to C-terminus: Large ribosomal subunit protein bL33 (52 aa).

Belongs to the bacterial ribosomal protein bL33 family.

The sequence is that of Large ribosomal subunit protein bL33 from Anaeromyxobacter sp. (strain Fw109-5).